The following is a 106-amino-acid chain: Large ribosomal subunit protein uL24 (106 aa).

It belongs to the universal ribosomal protein uL24 family. As to quaternary structure, part of the 50S ribosomal subunit.

One of two assembly initiator proteins, it binds directly to the 5'-end of the 23S rRNA, where it nucleates assembly of the 50S subunit. Its function is as follows. One of the proteins that surrounds the polypeptide exit tunnel on the outside of the subunit. The polypeptide is Large ribosomal subunit protein uL24 (Spiroplasma kunkelii).